The chain runs to 350 residues: MANKSLEIRFLFPLVLFLVVKLLCVDGKGFNNNGHKIRKGRWEGKLKMNFYHNSCPGAEDIVRQIVWKKVEANRSLAPKLLRVHYHDCFVRGCDASLLLDSVAGKAVSEKEARPNLSLSGFEIIDEIKYILEKRCPNTVSCADILTLAARDAVSYEFERPLWNVFTGRVDGRVSLATEAARDLPSAGANFTTLQKLFAESDLDVVDLVALSGAHTIGIAHCGVFGRRLLNFTGKGDTDPSLNPSYASFLKSECSDKSLRLNPSAVVGMDPTGPLAFDSGYFVSLLKNKGLFTSDAALLTDPSAAHIASVFQNSGAFLAQFGRSMIKMSSIKVLTLGDQGGEIRKNCRLVN.

Residues 1–27 (MANKSLEIRFLFPLVLFLVVKLLCVDG) form the signal peptide. 4 cysteine pairs are disulfide-bonded: cysteine 55–cysteine 135, cysteine 88–cysteine 93, cysteine 141–cysteine 346, and cysteine 221–cysteine 253. An N-linked (GlcNAc...) asparagine glycan is attached at asparagine 73. The Proton acceptor role is filled by histidine 86. Ca(2+) contacts are provided by aspartate 87, valine 90, glycine 92, aspartate 94, and serine 96. Proline 184 lines the substrate pocket. Residue asparagine 189 is glycosylated (N-linked (GlcNAc...) asparagine). Histidine 214 lines the heme b pocket. Residue threonine 215 coordinates Ca(2+). Asparagine 230 carries N-linked (GlcNAc...) asparagine glycosylation. Residues aspartate 269 and aspartate 277 each contribute to the Ca(2+) site.

Belongs to the peroxidase family. Classical plant (class III) peroxidase subfamily. Requires heme b as cofactor. Ca(2+) serves as cofactor.

Its subcellular location is the secreted. It carries out the reaction 2 a phenolic donor + H2O2 = 2 a phenolic radical donor + 2 H2O. In terms of biological role, removal of H(2)O(2), oxidation of toxic reductants, biosynthesis and degradation of lignin, suberization, auxin catabolism, response to environmental stresses such as wounding, pathogen attack and oxidative stress. These functions might be dependent on each isozyme/isoform in each plant tissue. This is Peroxidase 24 (PER24) from Arabidopsis thaliana (Mouse-ear cress).